We begin with the raw amino-acid sequence, 340 residues long: tRNA N6-adenosine threonylcarbamoyltransferase (340 aa).

The Fe cation site is built by histidine 111 and histidine 115. Substrate contacts are provided by residues 134-138, aspartate 167, glycine 180, and asparagine 276; that span reads LVSGG. Aspartate 304 serves as a coordination point for Fe cation.

This sequence belongs to the KAE1 / TsaD family. It depends on Fe(2+) as a cofactor.

The protein resides in the cytoplasm. The enzyme catalyses L-threonylcarbamoyladenylate + adenosine(37) in tRNA = N(6)-L-threonylcarbamoyladenosine(37) in tRNA + AMP + H(+). In terms of biological role, required for the formation of a threonylcarbamoyl group on adenosine at position 37 (t(6)A37) in tRNAs that read codons beginning with adenine. Is involved in the transfer of the threonylcarbamoyl moiety of threonylcarbamoyl-AMP (TC-AMP) to the N6 group of A37, together with TsaE and TsaB. TsaD likely plays a direct catalytic role in this reaction. The sequence is that of tRNA N6-adenosine threonylcarbamoyltransferase from Helicobacter pylori (strain ATCC 700392 / 26695) (Campylobacter pylori).